Reading from the N-terminus, the 216-residue chain is Ras-related protein RABE1d (216 aa).

GTP is bound at residue 22–29 (GDSGVGKS). The Effector region motif lies at 44–52 (FITTIGIDF). Residues 70-74 (DTAGQ), 128-131 (NKAD), and 159-160 (SA) each bind GTP. The interval 196-216 (TKQDTAASSSTAEKSACCSYV) is disordered. Residues 200–216 (TAASSSTAEKSACCSYV) show a composition bias toward low complexity. S-geranylgeranyl cysteine attachment occurs at residues C212 and C213.

The protein belongs to the small GTPase superfamily. Rab family. Interacts with PI5K2.

The protein localises to the golgi apparatus membrane. Its subcellular location is the cell membrane. Involved in membrane trafficking from the Golgi to the plasma membrane. In Arabidopsis thaliana (Mouse-ear cress), this protein is Ras-related protein RABE1d (RABE1D).